Here is a 500-residue protein sequence, read N- to C-terminus: Cytochrome P450 2D4 (500 aa).

Cys446 contributes to the heme binding site.

This sequence belongs to the cytochrome P450 family. The cofactor is heme. In terms of tissue distribution, brain.

Its subcellular location is the endoplasmic reticulum membrane. It localises to the microsome membrane. The catalysed reaction is an organic molecule + reduced [NADPH--hemoprotein reductase] + O2 = an alcohol + oxidized [NADPH--hemoprotein reductase] + H2O + H(+). In terms of biological role, cytochromes P450 are a group of heme-thiolate monooxygenases. In liver microsomes, this enzyme is involved in an NADPH-dependent electron transport pathway. It oxidizes a variety of structurally unrelated compounds, including steroids, fatty acids, and xenobiotics. The polypeptide is Cytochrome P450 2D4 (Cyp2d4) (Rattus norvegicus (Rat)).